A 403-amino-acid polypeptide reads, in one-letter code: Argininosuccinate synthase (403 aa).

ATP-binding positions include 13-21 (AYSGGLDTS) and alanine 40. L-citrulline is bound by residues tyrosine 91 and serine 96. Glycine 121 serves as a coordination point for ATP. L-aspartate-binding residues include threonine 123, asparagine 127, and aspartate 128. Asparagine 127 contacts L-citrulline. L-citrulline is bound by residues arginine 131, serine 180, serine 189, glutamate 265, and tyrosine 277.

Belongs to the argininosuccinate synthase family. Type 1 subfamily. In terms of assembly, homotetramer.

It localises to the cytoplasm. The catalysed reaction is L-citrulline + L-aspartate + ATP = 2-(N(omega)-L-arginino)succinate + AMP + diphosphate + H(+). It participates in amino-acid biosynthesis; L-arginine biosynthesis; L-arginine from L-ornithine and carbamoyl phosphate: step 2/3. The polypeptide is Argininosuccinate synthase (Leptospira borgpetersenii serovar Hardjo-bovis (strain JB197)).